Consider the following 396-residue polypeptide: Purine ribonucleoside efflux pump NepI (396 aa).

The Cytoplasmic portion of the chain corresponds to 1–21; that stretch reads MSEFIAENRGADAITRPNWSA. A helical membrane pass occupies residues 22–42; sequence VFSVAFCVACLIIVEFLPVSL. The Periplasmic portion of the chain corresponds to 43-54; the sequence is LTPMAQDLGISE. Residues 55-75 traverse the membrane as a helical segment; that stretch reads GVAGQSVTVTAFVAMFASLFI. At 76–85 the chain is on the cytoplasmic side; it reads TQTIQATDRR. Residues 86–106 form a helical membrane-spanning segment; the sequence is YVVILFAVLLTLSCLLVSFAN. A topological domain (periplasmic) is located at residue S107. A helical transmembrane segment spans residues 108–128; sequence FSLLLIGRACLGLALGGFWAM. The Cytoplasmic portion of the chain corresponds to 129–147; it reads SASLTMRLVPPRTVPKALS. The helical transmembrane segment at 148–168 threads the bilayer; the sequence is VIFGAVSIALVIAAPLGCFLG. At 169–175 the chain is on the periplasmic side; it reads ELIGWRN. A helical transmembrane segment spans residues 176–196; that stretch reads VFNAAAAMGVLCIFWIIKSLP. Residues 197 to 215 are Cytoplasmic-facing; the sequence is SLPGEPSHQKQNTFRLLQR. A helical transmembrane segment spans residues 216 to 236; that stretch reads PGVMAGMIAIFMSFAGQFAFF. Over 237–255 the chain is Periplasmic; it reads TYIRPVYMTLAGFGVDGLT. Residues 256 to 276 form a helical membrane-spanning segment; sequence LVLLSFGIASFVGTSLSSFIL. At 277 to 281 the chain is on the cytoplasmic side; the sequence is KRSVK. A helical transmembrane segment spans residues 282-302; that stretch reads LALAGAPFVLALSALVLTLWG. At 303–305 the chain is on the periplasmic side; the sequence is SDK. The chain crosses the membrane as a helical span at residues 306-326; that stretch reads IVATGVAIIWGLTFALIPVGW. Over 327 to 343 the chain is Cytoplasmic; it reads STWITRSLADQAEKAGS. A helical membrane pass occupies residues 344-364; the sequence is IQVAVIQLANTCGAAIGGYAL. Over 365 to 366 the chain is Periplasmic; the sequence is DN. A helical transmembrane segment spans residues 367–387; the sequence is IGLTSPLMLSGTLMLLTALLV. At 388–396 the chain is on the cytoplasmic side; that stretch reads TAKVKMKKS.

This sequence belongs to the major facilitator superfamily. DHA1 family. NepI (TC 2.A.1.2.26) subfamily.

It localises to the cell inner membrane. It catalyses the reaction inosine(in) + H(+)(out) = inosine(out) + H(+)(in). It carries out the reaction guanosine(in) + H(+)(out) = guanosine(out) + H(+)(in). Its function is as follows. Involved in the efflux of purine ribonucleosides, such as inosine and guanosine. This Escherichia coli O157:H7 protein is Purine ribonucleoside efflux pump NepI.